A 257-amino-acid chain; its full sequence is Imidazole glycerol phosphate synthase subunit HisF (257 aa).

Catalysis depends on residues aspartate 12 and aspartate 131.

Belongs to the HisA/HisF family. As to quaternary structure, heterodimer of HisH and HisF.

Its subcellular location is the cytoplasm. It carries out the reaction 5-[(5-phospho-1-deoxy-D-ribulos-1-ylimino)methylamino]-1-(5-phospho-beta-D-ribosyl)imidazole-4-carboxamide + L-glutamine = D-erythro-1-(imidazol-4-yl)glycerol 3-phosphate + 5-amino-1-(5-phospho-beta-D-ribosyl)imidazole-4-carboxamide + L-glutamate + H(+). The protein operates within amino-acid biosynthesis; L-histidine biosynthesis; L-histidine from 5-phospho-alpha-D-ribose 1-diphosphate: step 5/9. Its function is as follows. IGPS catalyzes the conversion of PRFAR and glutamine to IGP, AICAR and glutamate. The HisF subunit catalyzes the cyclization activity that produces IGP and AICAR from PRFAR using the ammonia provided by the HisH subunit. The polypeptide is Imidazole glycerol phosphate synthase subunit HisF (Marinobacter nauticus (strain ATCC 700491 / DSM 11845 / VT8) (Marinobacter aquaeolei)).